Reading from the N-terminus, the 354-residue chain is Phenylalanine--tRNA ligase alpha subunit (354 aa).

Residue E279 participates in Mg(2+) binding.

The protein belongs to the class-II aminoacyl-tRNA synthetase family. Phe-tRNA synthetase alpha subunit type 1 subfamily. Tetramer of two alpha and two beta subunits. Mg(2+) serves as cofactor.

The protein localises to the cytoplasm. The enzyme catalyses tRNA(Phe) + L-phenylalanine + ATP = L-phenylalanyl-tRNA(Phe) + AMP + diphosphate + H(+). This chain is Phenylalanine--tRNA ligase alpha subunit, found in Cupriavidus pinatubonensis (strain JMP 134 / LMG 1197) (Cupriavidus necator (strain JMP 134)).